Reading from the N-terminus, the 380-residue chain is Zinc finger protein neuro-d4 (380 aa).

The interval 132-164 is disordered; the sequence is ALLDCQKPPPGDFAHDAEGDEMEDDAPRRKNKA. The C2H2-type zinc-finger motif lies at 190 to 213; it reads YVCDICGKRYKNRPGLSYHYTHTH. 2 consecutive PHD-type zinc fingers follow at residues 262-321 and 318-368; these read EGPC…CKNC and CKNC…CLRQ. The Zn(2+) site is built by Cys265, Cys268, Cys286, Cys289, His294, Cys297, Cys315, Cys318, Cys321, Cys324, Cys336, Cys339, His344, Cys347, Cys362, and Cys365.

Belongs to the requiem/DPF family. As to quaternary structure, component of neuron-specific chromatin remodeling complex (nBAF complex), a subfamily of ATP-dependent SWI/SNF chromatin remodeling complexes.

Its subcellular location is the cytoplasm. It is found in the nucleus. May have an important role in developing neurons by participating in regulation of cell survival, possibly as a neurospecific transcription factor. Belongs to the neuron-specific chromatin remodeling complex (nBAF complex) and plays a role in neural development. The sequence is that of Zinc finger protein neuro-d4 from Gallus gallus (Chicken).